Consider the following 352-residue polypeptide: Maleylacetate reductase (352 aa).

It belongs to the iron-containing alcohol dehydrogenase family.

It carries out the reaction 3-oxoadipate + NAD(+) = maleylacetate + NADH + H(+). The catalysed reaction is 3-oxoadipate + NADP(+) = maleylacetate + NADPH + H(+). Its pathway is xenobiotic degradation; (2,4,5-trichlorophenoxy)acetate degradation. In Burkholderia cepacia (Pseudomonas cepacia), this protein is Maleylacetate reductase (tftE).